Consider the following 411-residue polypeptide: Phosphoglycerate kinase (411 aa).

Residues D19–N21, R34, H57–R60, R114, and R154 contribute to the substrate site. ATP-binding positions include E332 and G358 to S361.

Belongs to the phosphoglycerate kinase family. Monomer.

It localises to the cytoplasm. It carries out the reaction (2R)-3-phosphoglycerate + ATP = (2R)-3-phospho-glyceroyl phosphate + ADP. The protein operates within carbohydrate degradation; glycolysis; pyruvate from D-glyceraldehyde 3-phosphate: step 2/5. The chain is Phosphoglycerate kinase from Thermococcus kodakarensis (strain ATCC BAA-918 / JCM 12380 / KOD1) (Pyrococcus kodakaraensis (strain KOD1)).